A 219-amino-acid chain; its full sequence is Regulatory protein YeiL (219 aa).

Residues 19 to 97 (RLFHFLARDY…IEECWCLALP (79 aa)) are sensory domain. Positions 68, 91, 93, and 116 each coordinate [4Fe-4S] cluster. The interval 111 to 131 (FLRKLCVTLSHKNYRNIVSLT) is dimer interface. Residues 136–199 (FPLVNRLAAF…KKGYLIKNRK (64 aa)) form the HTH crp-type domain. The segment at residues 158 to 181 (KHTQAAEYLGVSYRHLLYVLAQFI) is a DNA-binding region (H-T-H motif).

In terms of assembly, homodimer. The cofactor is [4Fe-4S] cluster.

Its subcellular location is the cytoplasm. Its function is as follows. Transcription regulator involved in mid-term, stationary-phase viability under nitrogen starvation. Might control expression of the salvage pathways or in some other way repress the recycling of nucleobases to nucleic acids and enhance their use as general nitrogen sources during nitrogen-limited growth. The sequence is that of Regulatory protein YeiL (yeiL) from Escherichia coli O157:H7.